Reading from the N-terminus, the 22-residue chain is NDMA-dependent alcohol dehydrogenase (22 aa).

Belongs to the zinc-containing alcohol dehydrogenase family. Homotetramer. Requires NADH as cofactor.

The protein resides in the cytoplasm. The enzyme catalyses N,N-dimethyl-4-nitrosoaniline + a primary alcohol = 4-(hydroxylamino)-N,N-dimethylaniline + an aldehyde. The catalysed reaction is ethanol + A = acetaldehyde + AH2. Functionally, this is a novel enzyme, catalytically different from common alcohol dehydrogenases. It is effective in oxidizing ethanol, other primary alcohols and benzylalcohol only in the presence of p-nitroso-N,N-dimethylaniline (NDMA) as an electron acceptor. NADH acts as a cofactor here instead of as a coenzyme. In Rhodococcus erythropolis (Arthrobacter picolinophilus), this protein is NDMA-dependent alcohol dehydrogenase.